Consider the following 173-residue polypeptide: Photosystem I assembly protein Ycf3 (173 aa).

3 TPR repeats span residues 36–69 (AFAYYRDGMAAQSEGEYAEALENYREALALEQDD), 73–106 (SYILYNMGLIYQSNGELDKALEYYHQALELNPRL), and 121–154 (GEQSLQAGDEETAEALFDEAAQYWIRAIRIAPNN).

It belongs to the Ycf3 family.

Its subcellular location is the cellular thylakoid membrane. Functionally, essential for the assembly of the photosystem I (PSI) complex. May act as a chaperone-like factor to guide the assembly of the PSI subunits. The sequence is that of Photosystem I assembly protein Ycf3 from Synechococcus sp. (strain JA-3-3Ab) (Cyanobacteria bacterium Yellowstone A-Prime).